We begin with the raw amino-acid sequence, 171 residues long: I (171 aa).

2 disordered regions span residues 57–100 and 143–171; these read IQYP…LFAQ and PRTSTPVTEFKRGGGRERLPKARQSKRRA. Residues 151 to 162 show a composition bias toward basic and acidic residues; it reads EFKRGGGRERLP.

This sequence belongs to the Orthorubulavirus I protein family.

The polypeptide is I (Mumps virus genotype N (strain L-Zagreb vaccine) (MuV)).